A 144-amino-acid chain; its full sequence is Large ribosomal subunit protein uL14 (144 aa).

The disordered stretch occupies residues 107–144 (NEGYTHSQHSNQREGGERIQAQPSPPHARRAVKTSFCR).

It belongs to the universal ribosomal protein uL14 family. Part of the 50S ribosomal subunit. Forms a cluster with proteins L3 and L19. In the 70S ribosome, L14 and L19 interact and together make contacts with the 16S rRNA in bridges B5 and B8.

Binds to 23S rRNA. Forms part of two intersubunit bridges in the 70S ribosome. The polypeptide is Large ribosomal subunit protein uL14 (Xanthobacter autotrophicus (strain ATCC BAA-1158 / Py2)).